We begin with the raw amino-acid sequence, 295 residues long: MLIIDGKKVSLDLKNELKASVDNFRSITGKVPGLTVIIVGQDPASQVYVRNKAKTCKEIGMISTVIEMADDTTEKHLIETIHKLNNDPTVHGILVQQPLPKQIDEFAVTLAIDPSKDVDGFHPENLGRLVMGHLDKCFVSCTPYGILELLGRYNIETRGKHCVVVGRSNIVGKPMANLMLQKLDATNCTVTICHSATKNIPFYTLQADILIAAIGKAGFITADMVKPGAVVIDVGINRIEDPSTKSGYRLVGDVDFEAVSTVASAMTPVPGGVGPMTIAMLLKNTLQSFQRINNL.

Residues 166–168, S195, and I236 contribute to the NADP(+) site; that span reads GRS.

This sequence belongs to the tetrahydrofolate dehydrogenase/cyclohydrolase family. Homodimer.

It carries out the reaction (6R)-5,10-methylene-5,6,7,8-tetrahydrofolate + NADP(+) = (6R)-5,10-methenyltetrahydrofolate + NADPH. It catalyses the reaction (6R)-5,10-methenyltetrahydrofolate + H2O = (6R)-10-formyltetrahydrofolate + H(+). It functions in the pathway one-carbon metabolism; tetrahydrofolate interconversion. In terms of biological role, catalyzes the oxidation of 5,10-methylenetetrahydrofolate to 5,10-methenyltetrahydrofolate and then the hydrolysis of 5,10-methenyltetrahydrofolate to 10-formyltetrahydrofolate. This is Bifunctional protein FolD from Pelodictyon phaeoclathratiforme (strain DSM 5477 / BU-1).